A 586-amino-acid chain; its full sequence is MLDERGALARGAAEAIRAGYEAYQAERARITARARGRFEARDWAGAQRDARERLDLRDGVVHRTVGEVRAELGGAVQDREVWRRAKEAFEAVAAARPDAEIAGSFFNSVTRRVLTTVGVDPAIEFLAADAPPPREDPPQHRAFAREATTEALLARILRAAPISAPFEDLARDARLAALELDAHVRGLPDRQPIDAVELARPVFYRGKGAYLVGRIRRGRHLTPLVLALAHGDRGVALDAVLFTEEDVSIVFGFTRSYFHVALERPRAMVAFLSTLLPLKRRSELYTGLGYHKHGKAELYREVAQHLAEGDDRFVPARGDRGLVMCVFTLPGLDVIFKVIRDRFAPPKQTTRREVMDRYRHVFRHDRAGRLVDAQEYEHLAFPAARFSPALLEELRTECGDGVRVAGGEVAIRHLYAERRVTPLNLFVREADEWTARQAVLDFGCALRDLAATDTFPGDLLLKNFGVTRHGRVIFYDYDELTRVTDCNFRDLPGAGPGDGDDGWGGGPDAGYDGGDPPFYVGPADVFPEELLPFLGLTGRLREVFLRAHGELLTGRWWRDIQARLRAGEIVDIFPYREEQRLRHAHP.

ATP-binding positions include 316–322 and K337; that span reads ARGDRGL. Residue D372 is part of the active site.

This sequence belongs to the AceK family.

Its subcellular location is the cytoplasm. It carries out the reaction L-seryl-[isocitrate dehydrogenase] + ATP = O-phospho-L-seryl-[isocitrate dehydrogenase] + ADP + H(+). Functionally, bifunctional enzyme which can phosphorylate or dephosphorylate isocitrate dehydrogenase (IDH) on a specific serine residue. This is a regulatory mechanism which enables bacteria to bypass the Krebs cycle via the glyoxylate shunt in response to the source of carbon. When bacteria are grown on glucose, IDH is fully active and unphosphorylated, but when grown on acetate or ethanol, the activity of IDH declines drastically concomitant with its phosphorylation. The polypeptide is Isocitrate dehydrogenase kinase/phosphatase (Anaeromyxobacter dehalogenans (strain 2CP-C)).